Consider the following 85-residue polypeptide: Toxin 3FTx-Lei1 (85 aa).

The N-terminal stretch at 1 to 21 is a signal peptide; the sequence is MKTLLLSLVVVTFVCLDLAHT. 5 disulfide bridges follow: Cys-24–Cys-45, Cys-27–Cys-32, Cys-38–Cys-63, Cys-67–Cys-78, and Cys-79–Cys-84.

This sequence belongs to the three-finger toxin family. Ancestral subfamily. Expressed by the venom gland.

It is found in the secreted. The protein is Toxin 3FTx-Lei1 of Leioheterodon madagascariensis (Malagasy giant hognose snake).